A 330-amino-acid polypeptide reads, in one-letter code: Low affinity immunoglobulin gamma Fc region receptor II (330 aa).

The signal sequence occupies residues 1 to 29 (MESNWTVHVFSRTLCHMLLWTAVLNLAAG). Topologically, residues 30–210 (THDLPKAVVK…QGPKSSRSLP (181 aa)) are extracellular. 2 consecutive Ig-like C2-type domains span residues 50-106 (EDTV…QTRL) and 131-189 (GETI…LGRT). Cystine bridges form between C57–C99 and C138–C182. 4 N-linked (GlcNAc...) asparagine glycosylation sites follow: N65, N92, N166, and N173. The helical transmembrane segment at 211-231 (VLTIVAAVTGIAVAAIVIILV) threads the bilayer. Residues 232 to 330 (SLVYLKKKQV…ETEHDYQNHI (99 aa)) lie on the Cytoplasmic side of the membrane. Residues 261 to 330 (VGEYRQPSGG…ETEHDYQNHI (70 aa)) form a disordered region. Y290 is subject to Phosphotyrosine. The short motif at 307–312 (ITYSLL) is the ITIM motif element. Y309 carries the post-translational modification Phosphotyrosine; by SRC-type Tyr-kinases. Y326 carries the phosphotyrosine modification.

As to quaternary structure, interacts with FGR. Interacts with LYN. In terms of processing, glycosylated. When coaggregated to BCR, isoform IIB1 and isoform IIB1' become tyrosine phosphorylated and bind to the SH2 domains of the protein tyrosine phosphatase PTPC1. Phosphorylated by SRC-type Tyr-kinases such as LYN, BLK, FYN and SYK. Widely expressed by cells of hemopoietic origin. The isoforms are differentially expressed. Isoform IIB1 is preferentially expressed by cells of the lymphoid lineage, isoform IIB2 by cells of the myeloid lineage, and isoform IIB3 is released by macrophages and is present in the serum. Isoform IIB1' is expressed in myeloid and lymphoid cell lines, in normal spleen cells, and in resting or LPS-activated B-cells but is not detected in mesenteric lymph node cells.

Its subcellular location is the cell membrane. It is found in the cytoplasm. The protein localises to the cytoskeleton. It localises to the secreted. Its function is as follows. Receptor for the Fc region of complexed immunoglobulins gamma. Low affinity receptor. Involved in a variety of effector and regulatory functions such as phagocytosis of antigen-antibody complexes from the circulation and modulation of antibody production by B-cells. Isoform IIB1 and isoform IIB1' form caps but fail to mediate endocytosis or phagocytosis. Isoform IIB2 can mediate the endocytosis of soluble immune complexes via clathrin-coated pits. Isoform IIB1 and isoform IIB2 can down-regulate B-cell, T-cell, and mast cell activation when coaggregated to B-cell receptors for AG (BCR), T-cell receptors for AG (TCR), and Fc receptors, respectively. This chain is Low affinity immunoglobulin gamma Fc region receptor II (Fcgr2), found in Mus musculus (Mouse).